Consider the following 295-residue polypeptide: Sperm acrosome membrane-associated protein 1 (295 aa).

A signal peptide spans 1-29 (MSPGGAGCSAGLLLTVGWLLLAGLQSTCG). The Extracellular segment spans residues 30 to 220 (INVTAVQDPS…SRPDTDAVLV (191 aa)). Residues 39-71 (SLVSEGENEGEEEAENDSEVENEPQAEAEQDVS) form a disordered region. Over residues 44–68 (GENEGEEEAENDSEVENEPQAEAEQ) the composition is skewed to acidic residues. Asn72 is a glycosylation site (N-linked (GlcNAc...) asparagine). Residues 221–241 (FVLTIGVIICIFVIFVLIFII) traverse the membrane as a helical segment. At 242–295 (VNWATVKDFWASKASTTEIQSELSSMKYKDSTSLDQSPTEIPGHEDDALSEWNE) the chain is on the cytoplasmic side. The residue at position 256 (Ser256) is a Phosphoserine. Residues 263–295 (ELSSMKYKDSTSLDQSPTEIPGHEDDALSEWNE) are disordered. Tyr269 carries the post-translational modification Phosphotyrosine. Phosphoserine occurs at positions 278 and 291.

As to quaternary structure, interacts with CYLC1; the interaction may be relevant for proper acrosome attachment to the nuclear envelope. Post-translationally, N-glycosylated. In terms of tissue distribution, detected in spermatozoa (at protein level).

It is found in the cytoplasmic vesicle. Its subcellular location is the secretory vesicle. The protein resides in the acrosome inner membrane. Functionally, plays a role in acrosome expansion and establishment of normal sperm morphology during spermatogenesis. Important for male fertility. The chain is Sperm acrosome membrane-associated protein 1 from Sus scrofa (Pig).